The sequence spans 438 residues: Prenyltransferase malE (438 aa).

Position 92 (glutamate 92) interacts with substrate. Arginine 106, lysine 192, tyrosine 194, lysine 259, tyrosine 261, tyrosine 346, and tyrosine 411 together coordinate dimethylallyl diphosphate.

It belongs to the tryptophan dimethylallyltransferase family.

It carries out the reaction (S)-3-(indol-3-ylmethyl)-6,7,8,8a-tetrahydropyrrolo[1,2-a]pyrazin-1-one + dimethylallyl diphosphate = (S)-3-{[2-(1,1-dimethylallyl)-indol-3-yl]methyl}-6,7,8,8a-tetrahydropyrrolo[1,2-a]pyrazin-1-one + diphosphate. The enzyme catalyses 1-hydroxy-3-(indol-3-ylmethyl)-6H,7H,8H-5lambda(5)-pyrrolo[1,2-a]pyrazine + dimethylallyl diphosphate = 1-hydroxy-3-{[2-(1,1-dimethylallyl)-indol-3-yl]methyl}-6H,7H,8H-5lambda(5)-pyrrolo[1,2-a]pyrazine + diphosphate. It functions in the pathway alkaloid biosynthesis. Its function is as follows. Prenyltransferase; part of the gene cluster that mediates the biosynthesis of malbrancheamide, a dichlorinated fungal indole alkaloid that belongs to a family of natural products containing a characteristic bicyclo[2.2.2]diazaoctane core. The first step of malbrancheamide biosynthesis involves coupling of L-proline and L-tryptophan by malG, a bimodular NRPS, to produce L-Pro-L-Trp aldehyde through reductive offloading. This compound undergoes spontaneous cyclization and dehydration to give a dienamine which is reverse prenylated at C-2 by malE. The other prenyltransferase present in the cluster, malB, displays modest activity, suggesting that may be a redundant gene in the pathway. Subsequently, a [4+2] Diels-Alder cyclo-addition catalyzed by the bifunctional enzyme malC forms the characteristic bicyclo[2.2.2]diazaoctane ring of premalbrancheamid. Finally, the flavin-dependent halogenase malA catalyzes the iterative dichlorination of the indole ring of premalbrancheamide to yield C-9 monochlorinated malbrancheamide B, C-8 monochlorinated isomalbrancheamide B, and dichlorinated malbrancheamide. MalA is also able to brominate premalbrancheamide at C-9 to yield malbrancheamide C, and, to a lesser extend, at C-8 to yield isomalbrancheamide C. Finally, malA can brominate C-9 monochlorinated malbrancheamide B at C-8 to yield malbrancheamide D, or C-8 monochlorinated isomalbrancheamide B at C-9 to produce isomalbrancheamide D. This chain is Prenyltransferase malE, found in Malbranchea aurantiaca.